The sequence spans 1306 residues: Synergin gamma (1306 aa).

The stretch at 113–153 (MQKQFAEEQQKRFEQQQKLLEEERKRRQFEEQKQKLRLLSS) forms a coiled coil. Disordered regions lie at residues 176-196 (GFSR…KQGP) and 252-285 (SGPA…PAQS). Residues 258–272 (EAEKTSDQTLSKEES) are compositionally biased toward basic and acidic residues. The EH domain maps to 293-404 (NESLVPDAYK…TPVSQPTAMP (112 aa)). The DFXDF motif 1 signature appears at 455 to 459 (DFQDF). A disordered region spans residues 460-494 (QDASKSGSIDDSFTDFQEMPASSKTSNSQHGNSAP). Position 471 is a phosphoserine (S471). N6-acetyllysine is present on K509. The tract at residues 514 to 778 (KGISTDKPSE…ADFHSSKFSS (265 aa)) is interaction with AP1G1. The tract at residues 559-601 (STGTDDGFTDFKTADSVSPLEPPTKDTFPSAFASGAAQQTQTQ) is disordered. Residue S576 is modified to Phosphoserine. The interval 661-673 (LADDFGEFNLFGE) is interaction with AP1G1, AP1G2 and GGA1. The short motif at 685-689 (DFADF) is the DFXDF motif 2 element. The disordered stretch occupies residues 697-730 (ISSEPKASDKYEALREEVSPSPLSSSTVEGAQHP). Positions 702 to 714 (KASDKYEALREEV) are enriched in basic and acidic residues. S715 is subject to Phosphoserine. At K736 the chain carries N6-acetyllysine. 2 positions are modified to phosphoserine: S744 and S764. The DFXDF motif 3 motif lies at 767–771 (DFADF). S804, S844, S847, S901, S911, S927, S974, S998, S1065, S1067, S1079, and S1090 each carry phosphoserine. Disordered stretches follow at residues 986–1016 (PTVD…ADDF) and 1065–1090 (SLSL…RDRS). Over residues 993 to 1005 (ETSCPSPASSVAS) the composition is skewed to polar residues. T1092 is subject to Phosphothreonine.

As to quaternary structure, self-associates. Interacts with GGA1 (via GAE domain). Interacts with GGA2 and GGA3. Interacts with AP1G1 (via GAE domain), a subunit of adapter protein complex AP-1. Interacts with AP1G2 (via GAE domain) a subunit of adapter protein complex AP-1. Component of the aftiphilin/p200/gamma-synergin complex, at least composed of AFTPH/aftiphilin, HEATR5B/p200a and SYNRG/gamma-synergin, which plays a role in the AP1G1/AP-1-mediated trafficking of transferrin from early to recycling endosomes. Within the complex interacts with AFTPH/aftiphilin and HEATR5B/p200a; the interactions are direct. Interacts (via EH domain) with SCAMP1.

It is found in the cytoplasm. The protein resides in the cytosol. Its subcellular location is the golgi apparatus. It localises to the trans-Golgi network membrane. The protein localises to the perinuclear region. It is found in the cytoplasmic vesicle. The protein resides in the clathrin-coated vesicle. Functionally, plays a role in endocytosis and/or membrane trafficking at the trans-Golgi network (TGN). May act by linking the adapter protein complex AP-1 to other proteins. Component of clathrin-coated vesicles. Component of the aftiphilin/p200/gamma-synergin complex, which plays roles in AP1G1/AP-1-mediated protein trafficking including the trafficking of transferrin from early to recycling endosomes, and the membrane trafficking of furin and the lysosomal enzyme cathepsin D between the trans-Golgi network (TGN) and endosomes. In Mus musculus (Mouse), this protein is Synergin gamma (Synrg).